Reading from the N-terminus, the 118-residue chain is Small ribosomal subunit protein uS13 (118 aa).

The disordered stretch occupies residues 94 to 118 (SLPLRGQRTKTNARTRKGPRKPIRK).

The protein belongs to the universal ribosomal protein uS13 family. In terms of assembly, part of the 30S ribosomal subunit. Forms a loose heterodimer with protein S19. Forms two bridges to the 50S subunit in the 70S ribosome.

Its function is as follows. Located at the top of the head of the 30S subunit, it contacts several helices of the 16S rRNA. In the 70S ribosome it contacts the 23S rRNA (bridge B1a) and protein L5 of the 50S subunit (bridge B1b), connecting the 2 subunits; these bridges are implicated in subunit movement. Contacts the tRNAs in the A and P-sites. This chain is Small ribosomal subunit protein uS13, found in Shewanella sediminis (strain HAW-EB3).